The following is a 304-amino-acid chain: Small ribosomal subunit biogenesis GTPase RsgA (304 aa).

The 160-residue stretch at 70–229 folds into the CP-type G domain; the sequence is HNELNRPNIA…IADTPGFSKL (160 aa). GTP is bound by residues 119–122 and 172–180; these read TKID and GQTGVGKST. Residues cysteine 253, cysteine 259, histidine 261, and cysteine 267 each contribute to the Zn(2+) site.

This sequence belongs to the TRAFAC class YlqF/YawG GTPase family. RsgA subfamily. As to quaternary structure, monomer. Associates with 30S ribosomal subunit, binds 16S rRNA. Zn(2+) is required as a cofactor.

It localises to the cytoplasm. Functionally, one of several proteins that assist in the late maturation steps of the functional core of the 30S ribosomal subunit. Helps release RbfA from mature subunits. May play a role in the assembly of ribosomal proteins into the subunit. Circularly permuted GTPase that catalyzes slow GTP hydrolysis, GTPase activity is stimulated by the 30S ribosomal subunit. In Phytoplasma mali (strain AT), this protein is Small ribosomal subunit biogenesis GTPase RsgA.